Here is a 215-residue protein sequence, read N- to C-terminus: GTP-binding nuclear protein Ran (215 aa).

The Small GTPase Ran-type domain occupies 6–170 (DIPTFKLVLV…LWLARKLLGD (165 aa)). GTP contacts are provided by residues 17–24 (DGGTGKTT), 35–41 (EKKYVAT), Gly67, 121–124 (NKVD), and 149–151 (SAK). The switch-I stretch occupies residues 36–44 (KKYVATLGV). Positions 67–83 (GQEKFGGLRDGYYIQGQ) are switch-II.

This sequence belongs to the small GTPase superfamily. Ran family. In terms of assembly, found in a nuclear export complex with RanGTP, exportin and pre-miRNA.

It is found in the nucleus. In terms of biological role, GTP-binding protein involved in nucleocytoplasmic transport. Required for the import of protein into the nucleus and also for RNA export. Involved in chromatin condensation and control of cell cycle. This is GTP-binding nuclear protein Ran from Brugia malayi (Filarial nematode worm).